The following is a 1069-amino-acid chain: Leucine--tRNA ligase (1069 aa).

The interval 19-53 (TAEHGTGAANATASPSGAVPPSGATATAGTGDEPG) is disordered. A 'HIGH' region motif is present at residues 107–118 (PYPSGTGLHVGH). Over residues 823 to 836 (GRFTHHGAPVDRRS) the composition is skewed to basic and acidic residues. Residues 823 to 846 (GRFTHHGAPVDRRSGKMGKSLKNS) are disordered. Positions 838–842 (KMGKS) match the 'KMSKS' region motif. Lys841 serves as a coordination point for ATP.

This sequence belongs to the class-I aminoacyl-tRNA synthetase family.

The protein resides in the cytoplasm. It catalyses the reaction tRNA(Leu) + L-leucine + ATP = L-leucyl-tRNA(Leu) + AMP + diphosphate. This chain is Leucine--tRNA ligase, found in Frankia alni (strain DSM 45986 / CECT 9034 / ACN14a).